Consider the following 637-residue polypeptide: Probable potassium transport system protein Kup (637 aa).

12 helical membrane passes run 24-44, 64-84, 113-133, 151-171, 182-202, 225-245, 261-281, 290-310, 351-371, 381-401, 409-429, and 433-453; these read LAIAAIGVVFGDIGTSPLYAL, VISLLFWAIILVVGIKYLLFV, AGALMALGIFGACMFYGDAVI, PHLSHLVLPITIVILIALFWI, LFGPIMVVWFIVIAALGVYHI, LLQAYVVLGSVVLVLTGAEAL, AYGLVMPSLVLNYFGQGALLI, PFFLLAPEWGLLPLVVLSTVA, IYVPVVNWLLLFVILCIVIGF, YGIAVTATMVITTVLACVVMV, LLVGAIIAVFLAIDLGFFGAN, and VAQGGWLPLGIGALLFFLLMT.

It belongs to the HAK/KUP transporter (TC 2.A.72) family.

The protein resides in the cell inner membrane. The catalysed reaction is K(+)(in) + H(+)(in) = K(+)(out) + H(+)(out). Transport of potassium into the cell. Likely operates as a K(+):H(+) symporter. The chain is Probable potassium transport system protein Kup from Burkholderia ambifaria (strain ATCC BAA-244 / DSM 16087 / CCUG 44356 / LMG 19182 / AMMD) (Burkholderia cepacia (strain AMMD)).